The following is a 429-amino-acid chain: UDP-N-acetylglucosamine 1-carboxyvinyltransferase (429 aa).

22–23 (KN) serves as a coordination point for phosphoenolpyruvate. Arg-102 lines the UDP-N-acetyl-alpha-D-glucosamine pocket. Cys-126 serves as the catalytic Proton donor. Cys-126 carries the 2-(S-cysteinyl)pyruvic acid O-phosphothioketal modification. UDP-N-acetyl-alpha-D-glucosamine-binding positions include 131–135 (RPVDL), Asp-316, and Ile-338.

The protein belongs to the EPSP synthase family. MurA subfamily.

It is found in the cytoplasm. It catalyses the reaction phosphoenolpyruvate + UDP-N-acetyl-alpha-D-glucosamine = UDP-N-acetyl-3-O-(1-carboxyvinyl)-alpha-D-glucosamine + phosphate. It participates in cell wall biogenesis; peptidoglycan biosynthesis. Its function is as follows. Cell wall formation. Adds enolpyruvyl to UDP-N-acetylglucosamine. This Nitrobacter hamburgensis (strain DSM 10229 / NCIMB 13809 / X14) protein is UDP-N-acetylglucosamine 1-carboxyvinyltransferase.